The primary structure comprises 103 residues: N(4)-acetylcytidine amidohydrolase (103 aa).

The ASCH domain occupies 6 to 100; that stretch reads ITFFQRFQDD…GESQFYVIEF (95 aa). K21 functions as the Proton acceptor in the catalytic mechanism. T24 acts as the Nucleophile in catalysis. Catalysis depends on E74, which acts as the Proton donor.

The protein belongs to the N(4)-acetylcytidine amidohydrolase family.

The enzyme catalyses N(4)-acetylcytidine + H2O = cytidine + acetate + H(+). It carries out the reaction N(4)-acetyl-2'-deoxycytidine + H2O = 2'-deoxycytidine + acetate + H(+). It catalyses the reaction N(4)-acetylcytosine + H2O = cytosine + acetate + H(+). In terms of biological role, catalyzes the hydrolysis of N(4)-acetylcytidine (ac4C). In Klebsiella pneumoniae subsp. pneumoniae (strain ATCC 700721 / MGH 78578), this protein is N(4)-acetylcytidine amidohydrolase.